The following is a 237-amino-acid chain: Flagellar L-ring protein (237 aa).

The first 24 residues, 1 to 24, serve as a signal peptide directing secretion; the sequence is MNRLSVPRFSVLIASLCGITLLSG. The N-palmitoyl cysteine moiety is linked to residue Cys25. A lipid anchor (S-diacylglycerol cysteine) is attached at Cys25.

The protein belongs to the FlgH family. As to quaternary structure, the basal body constitutes a major portion of the flagellar organelle and consists of four rings (L,P,S, and M) mounted on a central rod.

The protein localises to the cell outer membrane. The protein resides in the bacterial flagellum basal body. Its function is as follows. Assembles around the rod to form the L-ring and probably protects the motor/basal body from shearing forces during rotation. The sequence is that of Flagellar L-ring protein from Pseudomonas syringae pv. syringae (strain B728a).